An 854-amino-acid polypeptide reads, in one-letter code: Translation initiation factor IF-2 (854 aa).

Disordered stretches follow at residues 52–79 and 128–265; these read RQHG…RDGG and RKQE…HGFQ. Polar residues predominate over residues 61–75; sequence SQRITLQRKTTSTLS. 2 stretches are compositionally biased toward basic and acidic residues: residues 128 to 150 and 211 to 232; these read RKQE…RQEA and VRHD…DNKR. Basic residues predominate over residues 247–257; sequence RGKLGRKNKKP. Residues 354–523 form the tr-type G domain; it reads KRAPVVTVMG…LLQAEVLELT (170 aa). A G1 region spans residues 363 to 370; it reads GHVDHGKT. GTP is bound at residue 363-370; the sequence is GHVDHGKT. Residues 388-392 form a G2 region; sequence GITQH. The interval 409 to 412 is G3; that stretch reads DTPG. 409–413 is a binding site for GTP; sequence DTPGH. Residues 463–466 are G4; it reads TKID. Positions 499–501 are G5; that stretch reads SAK.

Belongs to the TRAFAC class translation factor GTPase superfamily. Classic translation factor GTPase family. IF-2 subfamily.

It localises to the cytoplasm. One of the essential components for the initiation of protein synthesis. Protects formylmethionyl-tRNA from spontaneous hydrolysis and promotes its binding to the 30S ribosomal subunits. Also involved in the hydrolysis of GTP during the formation of the 70S ribosomal complex. The protein is Translation initiation factor IF-2 of Marinomonas sp. (strain MWYL1).